Consider the following 82-residue polypeptide: Small ribosomal subunit protein bS16 (82 aa).

The protein belongs to the bacterial ribosomal protein bS16 family.

This is Small ribosomal subunit protein bS16 from Vibrio vulnificus (strain CMCP6).